The chain runs to 335 residues: Trans-3-hydroxy-L-proline dehydratase (335 aa).

Cys91 serves as the catalytic Proton acceptor. Residues 92–93 (GH), His222, and 256–257 (GS) each bind substrate.

This sequence belongs to the proline racemase family. In terms of assembly, homodimer.

It catalyses the reaction trans-3-hydroxy-L-proline = 1-pyrroline-2-carboxylate + H2O. In terms of biological role, catalyzes the dehydration of trans-3-hydroxy-L-proline (t3LHyp) to Delta(1)-pyrroline-2-carboxylate (Pyr2C). Does not possess neither proline racemase nor 4-hydroxyproline 2-epimerase activities. The polypeptide is Trans-3-hydroxy-L-proline dehydratase (Burkholderia cenocepacia (strain HI2424)).